Consider the following 86-residue polypeptide: Protein Vpu (86 aa).

Residues 1-12 (MLELIGRIDYRL) lie on the Extracellular side of the membrane. Residues 13–33 (GVGALIVALIIVIIVWTIAYI) form a helical membrane-spanning segment. At 34-86 (EYRKLVRQRRIDWLVKRIKERAEDSGNESGGDTEELETMVDMGHLRLLDGNDL) the chain is on the cytoplasmic side. Serine 58 and serine 62 each carry phosphoserine; by host CK2.

This sequence belongs to the HIV-1 VPU protein family. As to quaternary structure, homopentamer. Interacts with host CD4 and BRTC; these interactions induce proteasomal degradation of CD4. Interacts with host BST2; this interaction leads to the degradation of host BST2. Interacts with host FBXW11. Interacts with host AP1M1; this interaction plays a role in the mistrafficking and subsequent degradation of host BST2. Interacts with host RANBP2; this interaction allows Vpu to down-regulate host BLM sumoylation. In terms of processing, phosphorylated by host CK2. This phosphorylation is necessary for interaction with human BTRC and degradation of CD4.

It localises to the host membrane. Ion channel activity is inhibited by hexamethylene amiloride in vitro. In terms of biological role, enhances virion budding, by targeting human CD4 and Tetherin/BST2 to proteasome degradation. Degradation of CD4 prevents any unwanted premature interactions between viral Env and its host receptor CD4 in the endoplasmic reticulum. Degradation of antiretroviral protein Tetherin/BST2 is important for virion budding, as BST2 tethers new viral particles to the host cell membrane. Mechanistically, Vpu bridges either CD4 or BST2 to BTRC, a substrate recognition subunit of the Skp1/Cullin/F-box protein E3 ubiquitin ligase, induces their ubiquitination and subsequent proteasomal degradation. The alteration of the E3 ligase specificity by Vpu seems to promote the degradation of host IKBKB, leading to NF-kappa-B down-regulation and subsequent apoptosis. Acts as a viroporin that forms an oligomeric ion channel in membranes. Modulates the host DNA repair mechanisms to promote degradation of nuclear viral cDNA in cells that are already productively infected in order to suppress immune sensing and proviral hyper-integration (superinfection). Manipulates PML-NBs and modulates SUMOylation of host BLM protein thereby enhancing its DNA-end processing activity toward viral unintegrated linear DNA. Also inhibits RAD52-mediated homologous repair of viral cDNA, preventing the generation of dead-end circular forms of single copies of the long terminal repeat and permitting sustained nucleolytic attack. The chain is Protein Vpu from Homo sapiens (Human).